We begin with the raw amino-acid sequence, 146 residues long: Lipoprotein signal peptidase (146 aa).

Helical transmembrane passes span 6–26 (IFLL…TLFL), 50–70 (MFAF…GGIL), and 82–104 (YAFP…FVHA). Catalysis depends on residues Asp108 and Asp125. A helical membrane pass occupies residues 123-143 (FADVAIDLAVAWILIMVYFFP).

This sequence belongs to the peptidase A8 family.

The protein resides in the cell inner membrane. It catalyses the reaction Release of signal peptides from bacterial membrane prolipoproteins. Hydrolyzes -Xaa-Yaa-Zaa-|-(S,diacylglyceryl)Cys-, in which Xaa is hydrophobic (preferably Leu), and Yaa (Ala or Ser) and Zaa (Gly or Ala) have small, neutral side chains.. The protein operates within protein modification; lipoprotein biosynthesis (signal peptide cleavage). Its function is as follows. This protein specifically catalyzes the removal of signal peptides from prolipoproteins. This Sulfurovum sp. (strain NBC37-1) protein is Lipoprotein signal peptidase.